The chain runs to 200 residues: ATP-dependent Clp protease proteolytic subunit (200 aa).

The Nucleophile role is filled by S103. The active site involves H128.

Belongs to the peptidase S14 family. As to quaternary structure, fourteen ClpP subunits assemble into 2 heptameric rings which stack back to back to give a disk-like structure with a central cavity, resembling the structure of eukaryotic proteasomes.

Its subcellular location is the cytoplasm. It catalyses the reaction Hydrolysis of proteins to small peptides in the presence of ATP and magnesium. alpha-casein is the usual test substrate. In the absence of ATP, only oligopeptides shorter than five residues are hydrolyzed (such as succinyl-Leu-Tyr-|-NHMec, and Leu-Tyr-Leu-|-Tyr-Trp, in which cleavage of the -Tyr-|-Leu- and -Tyr-|-Trp bonds also occurs).. Functionally, cleaves peptides in various proteins in a process that requires ATP hydrolysis. Has a chymotrypsin-like activity. Plays a major role in the degradation of misfolded proteins. The chain is ATP-dependent Clp protease proteolytic subunit from Vibrio vulnificus (strain CMCP6).